The chain runs to 296 residues: L-isoleucine 3(1)-dioxygenase (296 aa).

Fe cation-binding residues include His176, Asp178, and His267.

It belongs to the iron/ascorbate-dependent oxidoreductase family. L-ascorbate serves as cofactor. The cofactor is Fe(2+).

The enzyme catalyses L-isoleucine + 2-oxoglutarate + O2 = 3(1)-hydroxy-L-isoleucine + succinate + CO2. Catalyzes the hydroxylation of L-isoleucine at the C-4' position to form L-4'-hydroxyisoleucine (4'-HIL). Exhibits low activity with L-valine and L-methionine. The protein is L-isoleucine 3(1)-dioxygenase of Pantoea ananatis (strain AJ13355).